The following is a 375-amino-acid chain: Major DNA-binding protein (375 aa).

This sequence belongs to the herpesviridae DNA-binding protein family.

The protein resides in the host nucleus. Functionally, single-stranded DNA-binding protein required for DNA replication. In Equine herpesvirus 1 (strain HVS25A) (EHV-1), this protein is Major DNA-binding protein.